Reading from the N-terminus, the 227-residue chain is Pre-hexon-linking protein VIII (227 aa).

Thr64 is modified (phosphothreonine; by host). Positions 112-157 are excised as a propeptide; that stretch reads FRHRVRSPGQGITHLTIRGRGIQLNDESVSSSLGLRPDGTFQIGGA. Phosphoserine; by host occurs at positions 118 and 174.

It belongs to the adenoviridae hexon-linking protein family. In terms of assembly, interacts with the peripentonal hexons as well as the hexons in the facets. Part of a complex composed of the core-capsid bridging protein, the endosome lysis protein VI and the hexon-linking protein VIII; these interactions bridge the virus core to the capsid. Cleaved by the viral protease during virion maturation. May cause the middle segment to be shed from the capsid.

It is found in the virion. The protein localises to the host nucleus. In terms of biological role, structural component of the virion that acts as a cement protein on the capsid interior and which glue the peripentonal hexons and group-of-nine hexons together. This chain is Pre-hexon-linking protein VIII, found in Human adenovirus C serotype 5 (HAdV-5).